The chain runs to 300 residues: Transcription initiation factor IIB (300 aa).

The TFIIB-type zinc-finger motif lies at Thr-2–Glu-34. Zn(2+) is bound by residues Cys-7, Cys-10, Cys-26, and Cys-29. Tandem repeats lie at residues Ser-114–Leu-197 and Asp-210–Glu-291.

The protein belongs to the TFIIB family.

Stabilizes TBP binding to an archaeal box-A promoter. Also responsible for recruiting RNA polymerase II to the pre-initiation complex (DNA-TBP-TFIIB). The sequence is that of Transcription initiation factor IIB from Pyrococcus horikoshii (strain ATCC 700860 / DSM 12428 / JCM 9974 / NBRC 100139 / OT-3).